We begin with the raw amino-acid sequence, 312 residues long: Translation initiation factor IF3-2, chloroplastic (312 aa).

The N-terminal 55 residues, 1 to 55, are a transit peptide targeting the chloroplast; that stretch reads MAGITSSTVGFNAVFTGITKTVSSHSLFSVDSKLCSLRLSKTELSFTNLTPSPRR. Residues 253–263 show a composition bias toward basic and acidic residues; that stretch reads EMIRKPQEPPT. Residues 253–312 are disordered; the sequence is EMIRKPQEPPTRKKKKTAENEASASAAEITAEPEPEPEPEPEPEPEPEPEPEPEPLQIDS. Residues 272–282 are compositionally biased toward low complexity; sequence NEASASAAEIT. The span at 283–305 shows a compositional bias: acidic residues; the sequence is AEPEPEPEPEPEPEPEPEPEPEP.

It belongs to the IF-3 family. As to quaternary structure, monomer. As to expression, highly expressed in young, newly emerged leaves.

It localises to the plastid. The protein localises to the chloroplast. Its function is as follows. Chloroplast translation initiation factor that is essential for the coordination of leaf and chloroplast development. IF-3 binds to the 30S ribosomal subunit and shifts the equilibrium between 70S ribosomes and their 50S and 30S subunits in favor of the free subunits, thus enhancing the availability of 30S subunits on which protein synthesis initiation begins. The chain is Translation initiation factor IF3-2, chloroplastic from Arabidopsis thaliana (Mouse-ear cress).